A 433-amino-acid polypeptide reads, in one-letter code: uncharacterized protein (433 aa).

The protein localises to the virion. This is an uncharacterized protein from Acanthamoeba polyphaga (Amoeba).